Here is a 321-residue protein sequence, read N- to C-terminus: Lipoyl synthase (321 aa).

Positions 68, 73, 79, 94, 98, 101, and 308 each coordinate [4Fe-4S] cluster. The 218-residue stretch at 80 to 297 (FNHGTATFMI…KEVALELGFT (218 aa)) folds into the Radical SAM core domain.

It belongs to the radical SAM superfamily. Lipoyl synthase family. The cofactor is [4Fe-4S] cluster.

It localises to the cytoplasm. The catalysed reaction is [[Fe-S] cluster scaffold protein carrying a second [4Fe-4S](2+) cluster] + N(6)-octanoyl-L-lysyl-[protein] + 2 oxidized [2Fe-2S]-[ferredoxin] + 2 S-adenosyl-L-methionine + 4 H(+) = [[Fe-S] cluster scaffold protein] + N(6)-[(R)-dihydrolipoyl]-L-lysyl-[protein] + 4 Fe(3+) + 2 hydrogen sulfide + 2 5'-deoxyadenosine + 2 L-methionine + 2 reduced [2Fe-2S]-[ferredoxin]. It functions in the pathway protein modification; protein lipoylation via endogenous pathway; protein N(6)-(lipoyl)lysine from octanoyl-[acyl-carrier-protein]: step 2/2. Catalyzes the radical-mediated insertion of two sulfur atoms into the C-6 and C-8 positions of the octanoyl moiety bound to the lipoyl domains of lipoate-dependent enzymes, thereby converting the octanoylated domains into lipoylated derivatives. This is Lipoyl synthase from Vibrio parahaemolyticus serotype O3:K6 (strain RIMD 2210633).